A 37-amino-acid chain; its full sequence is MTAESMMFNGAVILMVLVLFGLAWGFLILKIQGGEAE.

The chain crosses the membrane as a helical span at residues 11–29 (AVILMVLVLFGLAWGFLIL).

The protein belongs to the PetM family. As to quaternary structure, the 4 large subunits of the cytochrome b6-f complex are cytochrome b6, subunit IV (17 kDa polypeptide, PetD), cytochrome f and the Rieske protein, while the 4 small subunits are PetG, PetL, PetM and PetN. The complex functions as a dimer.

The protein localises to the cellular thylakoid membrane. Its function is as follows. Component of the cytochrome b6-f complex, which mediates electron transfer between photosystem II (PSII) and photosystem I (PSI), cyclic electron flow around PSI, and state transitions. In Crocosphaera subtropica (strain ATCC 51142 / BH68) (Cyanothece sp. (strain ATCC 51142)), this protein is Cytochrome b6-f complex subunit 7.